The chain runs to 657 residues: UvrABC system protein B (657 aa).

In terms of domain architecture, Helicase ATP-binding spans 25 to 182; the sequence is KSIKKGNEFQ…KKLIEIQYER (158 aa). 38–45 provides a ligand contact to ATP; it reads GVTGSGKT. The short motif at 91–114 is the Beta-hairpin element; sequence YYDYYQPEAYVPQTDTFIEKDASI. A Helicase C-terminal domain is found at 429–595; the sequence is QIDDLYTEIQ…TINKEVRDLI (167 aa). Residues 621-656 form the UVR domain; sequence KKLIKEYTEEMMLAAKNLQFERAAQLRDEIEELKGK.

Belongs to the UvrB family. In terms of assembly, forms a heterotetramer with UvrA during the search for lesions. Interacts with UvrC in an incision complex.

The protein localises to the cytoplasm. Functionally, the UvrABC repair system catalyzes the recognition and processing of DNA lesions. A damage recognition complex composed of 2 UvrA and 2 UvrB subunits scans DNA for abnormalities. Upon binding of the UvrA(2)B(2) complex to a putative damaged site, the DNA wraps around one UvrB monomer. DNA wrap is dependent on ATP binding by UvrB and probably causes local melting of the DNA helix, facilitating insertion of UvrB beta-hairpin between the DNA strands. Then UvrB probes one DNA strand for the presence of a lesion. If a lesion is found the UvrA subunits dissociate and the UvrB-DNA preincision complex is formed. This complex is subsequently bound by UvrC and the second UvrB is released. If no lesion is found, the DNA wraps around the other UvrB subunit that will check the other stand for damage. The polypeptide is UvrABC system protein B (Clostridium botulinum (strain Alaska E43 / Type E3)).